We begin with the raw amino-acid sequence, 185 residues long: Threonylcarbamoyl-AMP synthase (185 aa).

The YrdC-like domain occupies 3-185 (EQAPDEVQEI…VDAISGKVLR (183 aa)).

It belongs to the SUA5 family. TsaC subfamily.

Its subcellular location is the cytoplasm. It carries out the reaction L-threonine + hydrogencarbonate + ATP = L-threonylcarbamoyladenylate + diphosphate + H2O. Functionally, required for the formation of a threonylcarbamoyl group on adenosine at position 37 (t(6)A37) in tRNAs that read codons beginning with adenine. Catalyzes the conversion of L-threonine, HCO(3)(-)/CO(2) and ATP to give threonylcarbamoyl-AMP (TC-AMP) as the acyladenylate intermediate, with the release of diphosphate. The sequence is that of Threonylcarbamoyl-AMP synthase from Shewanella sediminis (strain HAW-EB3).